Reading from the N-terminus, the 424-residue chain is MVSSMKVEWYLDFVDLNYEPGRDELIVEYYFEPNGVSPEEAAGRIASESSIGTWTTLWKLPEMAKRSMAKVFYLEKHGEGYIAKIAYPLTLFEEGSLVQLFSAIAGNVFGMKALKNLRLLDFHPPYEYLRHFKGPQFGVKGIREFMGIKDRPLTATVPKPKMGWSVEEYAEIAYELWSGGIDLLKDDENFTSFPFNRFEERVKKLYRVRDRVEAETGETKEYLINITGPVNVMEKRAELVANEGGQYVMIDIVVAGWSALQYMREVTEDLGLAIHAHRAMHAAFTRNPKHGITMFALAKAARMIGVDQIHTGTAVGKMAGDYEEIKKINDFLLSKWEHIRPVFPVASGGLHPGLMPELIRLFGKDLVIQAGGGVMGHPDGPRAGAKALRDAIDAAIEGLDLEEKAKSSPELKKALDKWGYLKPK.

The Proton acceptor role is filled by K159. K161 is a binding site for substrate. 3 residues coordinate Mg(2+): K185, D187, and E188. Residue K185 is modified to N6-carboxylysine. H277 serves as the catalytic Proton acceptor. Residues R278, H310, 347-349 (SGG), and 369-372 (QAGG) contribute to the substrate site.

Belongs to the RuBisCO large chain family. Type III subfamily. As to quaternary structure, homodimer or homodecamer. In contrast to form I RuBisCO, the form III RuBisCO is composed solely of large subunits. Requires Mg(2+) as cofactor.

The enzyme catalyses 2 (2R)-3-phosphoglycerate + 2 H(+) = D-ribulose 1,5-bisphosphate + CO2 + H2O. The catalysed reaction is D-ribulose 1,5-bisphosphate + O2 = 2-phosphoglycolate + (2R)-3-phosphoglycerate + 2 H(+). Catalyzes the addition of molecular CO(2) and H(2)O to ribulose 1,5-bisphosphate (RuBP), generating two molecules of 3-phosphoglycerate (3-PGA). Functions in an archaeal AMP degradation pathway, together with AMP phosphorylase and R15P isomerase. The chain is Ribulose bisphosphate carboxylase from Pyrococcus abyssi (strain GE5 / Orsay).